The primary structure comprises 283 residues: Elongation factor Ts (283 aa).

Residues 80-83 form an involved in Mg(2+) ion dislocation from EF-Tu region; sequence TDFV.

It belongs to the EF-Ts family.

The protein resides in the cytoplasm. Associates with the EF-Tu.GDP complex and induces the exchange of GDP to GTP. It remains bound to the aminoacyl-tRNA.EF-Tu.GTP complex up to the GTP hydrolysis stage on the ribosome. This is Elongation factor Ts from Actinobacillus pleuropneumoniae serotype 5b (strain L20).